The sequence spans 418 residues: Serine hydroxymethyltransferase (418 aa).

(6S)-5,6,7,8-tetrahydrofolate contacts are provided by residues leucine 121 and 125-127 (GHL). Lysine 230 carries the N6-(pyridoxal phosphate)lysine modification. 356-358 (SPF) provides a ligand contact to (6S)-5,6,7,8-tetrahydrofolate.

This sequence belongs to the SHMT family. In terms of assembly, homodimer. Pyridoxal 5'-phosphate is required as a cofactor.

It is found in the cytoplasm. It catalyses the reaction (6R)-5,10-methylene-5,6,7,8-tetrahydrofolate + glycine + H2O = (6S)-5,6,7,8-tetrahydrofolate + L-serine. It functions in the pathway one-carbon metabolism; tetrahydrofolate interconversion. The protein operates within amino-acid biosynthesis; glycine biosynthesis; glycine from L-serine: step 1/1. Its function is as follows. Catalyzes the reversible interconversion of serine and glycine with tetrahydrofolate (THF) serving as the one-carbon carrier. This reaction serves as the major source of one-carbon groups required for the biosynthesis of purines, thymidylate, methionine, and other important biomolecules. Also exhibits THF-independent aldolase activity toward beta-hydroxyamino acids, producing glycine and aldehydes, via a retro-aldol mechanism. The chain is Serine hydroxymethyltransferase from Shewanella piezotolerans (strain WP3 / JCM 13877).